Reading from the N-terminus, the 489-residue chain is 2-(3-amino-3-carboxypropyl)histidine synthase subunit 2 (489 aa).

At Met1 the chain carries N-acetylmethionine. A Phosphoserine modification is found at Ser7. [4Fe-4S] cluster-binding residues include Cys89, Cys110, and Cys341. Ser446 carries the phosphoserine modification. Thr467 carries the post-translational modification Phosphothreonine. A Phosphoserine modification is found at Ser488.

The protein belongs to the DPH1/DPH2 family. DPH2 subfamily. Component of the 2-(3-amino-3-carboxypropyl)histidine synthase complex composed of DPH1, DPH2, DPH3 and a NADH-dependent reductase. Interacts with DPH1. It depends on [4Fe-4S] cluster as a cofactor.

The protein operates within protein modification; peptidyl-diphthamide biosynthesis. In terms of biological role, required for the first step of diphthamide biosynthesis, a post-translational modification of histidine which occurs in elongation factor 2. DPH1 and DPH2 transfer a 3-amino-3-carboxypropyl (ACP) group from S-adenosyl-L-methionine (SAM) to a histidine residue, the reaction is assisted by a reduction system comprising DPH3 and a NADH-dependent reductase. Facilitates the reduction of the catalytic iron-sulfur cluster found in the DPH1 subunit. In Mus musculus (Mouse), this protein is 2-(3-amino-3-carboxypropyl)histidine synthase subunit 2 (Dph2).